We begin with the raw amino-acid sequence, 81 residues long: Short neurotoxin 1 (81 aa).

The N-terminal stretch at 1-21 is a signal peptide; sequence MKTLLLTLVVVTIVCLDLGYT. Intrachain disulfides connect Cys24-Cys43, Cys38-Cys60, Cys62-Cys73, and Cys74-Cys79.

This sequence belongs to the three-finger toxin family. Short-chain subfamily. Type I alpha-neurotoxin sub-subfamily. As to expression, expressed by the venom gland.

It is found in the secreted. In terms of biological role, binds to muscle nicotinic acetylcholine receptor (nAChR) and inhibit acetylcholine from binding to the receptor, thereby impairing neuromuscular transmission. The polypeptide is Short neurotoxin 1 (Austrelaps superbus (Lowland copperhead snake)).